Reading from the N-terminus, the 319-residue chain is Ninja-family protein AFP4 (319 aa).

The span at Asp-39 to Asp-54 shows a compositional bias: basic and acidic residues. Disordered stretches follow at residues Asp-39–Val-63, Phe-99–Arg-120, and Val-205–Asn-228.

It belongs to the Ninja family. In terms of assembly, interacts with ABI5/DPBF1, AREB3/DPBF3, EEL/DPBF4, ABF1 and ABF3/DPBF5. As to expression, predominantly expressed in roots and seedlings.

The protein localises to the nucleus. Functionally, acts as a negative regulator of abscisic acid (ABA) and salinity responses. The chain is Ninja-family protein AFP4 (AFP4) from Arabidopsis thaliana (Mouse-ear cress).